The following is a 525-amino-acid chain: Tigger transposable element-derived protein 2 (525 aa).

Residues 1-52 form the HTH psq-type domain; it reads MLGKRKRVVLTIKDKLDIIKKLEEGNSFKKLSVLYGIGESTVRDIKKNKERI. DNA-binding regions (H-T-H motif) lie at residues 28–48 and 100–132; these read FKKL…IKKN and TICA…FKQR. An HTH CENPB-type domain is found at 67–139; it reads KRKSMKSSTY…KQRHGIPKAA (73 aa). A DDE-1 domain is found at 168 to 385; that stretch reads LLPEQIYGAD…IRSNTITRAW (218 aa).

The protein belongs to the tigger transposable element derived protein family.

It is found in the nucleus. This Mus musculus (Mouse) protein is Tigger transposable element-derived protein 2 (Tigd2).